The primary structure comprises 783 residues: ATP-dependent 6-phosphofructokinase (783 aa).

Pro residues predominate over residues 1–10; the sequence is MAPPQAPVQP. The interval 1-20 is disordered; sequence MAPPQAPVQPPKRRRIGVLT. Residues 1 to 389 form an N-terminal catalytic PFK domain 1 region; the sequence is MAPPQAPVQP…YHFSYINTST (389 aa). ATP-binding positions include G23, 86–87, and 116–119; these read RC and GDGS. Residue D117 coordinates Mg(2+). Substrate-binding positions include 162 to 164, R199, 206 to 208, E263, R291, and 297 to 300; these read SID, MGR, and HTQR. D164 acts as the Proton acceptor in catalysis. The segment at 390–403 is interdomain linker; it reads PDHPKLLLPENKRM. The C-terminal regulatory PFK domain 2 stretch occupies residues 404 to 783; that stretch reads RIGIIHVGAP…NATWSCYENA (380 aa). Beta-D-fructose 2,6-bisphosphate is bound by residues R480, 537–541, R575, 582–584, E642, R668, 674–677, and R749; these read TISNN, QGG, and HFQQ.

This sequence belongs to the phosphofructokinase type A (PFKA) family. ATP-dependent PFK group I subfamily. Eukaryotic two domain clade 'E' sub-subfamily. In terms of assembly, homotetramer. It depends on Mg(2+) as a cofactor.

The protein resides in the cytoplasm. It carries out the reaction beta-D-fructose 6-phosphate + ATP = beta-D-fructose 1,6-bisphosphate + ADP + H(+). Its pathway is carbohydrate degradation; glycolysis; D-glyceraldehyde 3-phosphate and glycerone phosphate from D-glucose: step 3/4. Allosterically activated by ADP, AMP, or fructose 2,6-bisphosphate, and allosterically inhibited by ATP or citrate. Functionally, catalyzes the phosphorylation of D-fructose 6-phosphate to fructose 1,6-bisphosphate by ATP, the first committing step of glycolysis. The sequence is that of ATP-dependent 6-phosphofructokinase (pfkA) from Aspergillus niger.